Consider the following 853-residue polypeptide: Rod cGMP-specific 3',5'-cyclic phosphodiesterase subunit beta (853 aa).

Ser2 carries the post-translational modification N-acetylserine. GAF domains lie at 71-220 and 252-429; these read NMER…TLNL and DIER…GWSV. A PDEase domain is found at 481-814; that stretch reads EEDELGKILK…KEWKALADEY (334 aa). His557 acts as the Proton donor in catalysis. The a divalent metal cation site is built by His561, His597, Asp598, and Asp718. A Cysteine methyl ester modification is found at Cys850. A lipid anchor (S-geranylgeranyl cysteine) is attached at Cys850. Positions 851 to 853 are cleaved as a propeptide — removed in mature form; sequence RIL.

The protein belongs to the cyclic nucleotide phosphodiesterase family. In terms of assembly, oligomer composed of two catalytic chains (alpha and beta), an inhibitory chain (gamma) and the delta chain. A divalent metal cation is required as a cofactor.

The protein localises to the membrane. It is found in the cell projection. It localises to the cilium. The protein resides in the photoreceptor outer segment. It catalyses the reaction 3',5'-cyclic GMP + H2O = GMP + H(+). Its function is as follows. Necessary for the formation of a functional phosphodiesterase holoenzyme. Involved in retinal circadian rhythm photoentrainment via modulation of UVA and orange light-induced phase-shift of the retina clock. May participate in processes of transmission and amplification of the visual signal. Rod-specific cGMP phosphodiesterase that catalyzes the hydrolysis of 3',5'-cyclic GMP. Necessary for the formation of a functional phosphodiesterase holoenzyme. Involved in retinal circadian rhythm photoentrainment via modulation of UVA and orange light-induced phase-shift of the retina clock. May participate in processes of transmission and amplification of the visual signal. The polypeptide is Rod cGMP-specific 3',5'-cyclic phosphodiesterase subunit beta (PDE6B) (Bos taurus (Bovine)).